Here is a 1155-residue protein sequence, read N- to C-terminus: DNA-directed RNA polymerase subunit beta (1155 aa).

The protein belongs to the RNA polymerase beta chain family. The RNAP catalytic core consists of 2 alpha, 1 beta, 1 beta' and 1 omega subunit. When a sigma factor is associated with the core the holoenzyme is formed, which can initiate transcription.

The enzyme catalyses RNA(n) + a ribonucleoside 5'-triphosphate = RNA(n+1) + diphosphate. Its function is as follows. DNA-dependent RNA polymerase catalyzes the transcription of DNA into RNA using the four ribonucleoside triphosphates as substrates. The polypeptide is DNA-directed RNA polymerase subunit beta (Borrelia turicatae (strain 91E135)).